A 122-amino-acid polypeptide reads, in one-letter code: Small ribosomal subunit protein bS6 (122 aa).

It belongs to the bacterial ribosomal protein bS6 family.

Its function is as follows. Binds together with bS18 to 16S ribosomal RNA. In Methylibium petroleiphilum (strain ATCC BAA-1232 / LMG 22953 / PM1), this protein is Small ribosomal subunit protein bS6.